The sequence spans 938 residues: MTLLGSEHSLLIRSKFRSVLQLRLQQRRTQEQLANQGIIPPLKRPAEFHEQRKHLDSDKAKNSLKRKARNRCNSADLVNMHILQASTAERSIPTAQMKLKRARLADDLNEKIALRPGPLELVEKNILPVDSAVKEAIKGNQVSFSKSTDAFAFEEDSSSDGLSPDQTRSEDPQNSAGSPPDAKASDTPSTGSLGTNQDLASGSENDRNDSASQPSHQSDAGKQGLGPPSTPIAVHAAVKSKSLGDSKNRHKKPKDPKPKVKKLKYHQYIPPDQKAEKSPPPMDSAYARLLQQQQLFLQLQILSQQQQQQQHRFSYLGMHQAQLKEPNEQMVRNPNSSSTPLSNTPLSPVKNSFSGQTGVSSFKPGPLPPNLDDLKVSELRQQLRIRGLPVSGTKTALMDRLRPFQDCSGNPVPNFGDITTVTFPVTPNTLPNYQSSSSTSALSNGFYHFGSTSSSPPISPASSDLSVAGSLPDTFNDASPSFGLHPSPVHVCTEESLMSSLNGGSVPSELDGLDSEKDKMLVEKQKVINELTWKLQQEQRQVEELRMQLQKQKRNNCSEKKPLPFLAASIKQEEAVSSCPFASQVPVKRQSSSSECHPPACEAAQLQPLGNAHCVESSDQTNVLSSTFLSPQCSPQHSPLGAVKSPQHISLPPSPNNPHFLPSSSGAQGEGHRVSSPISSQVCTAQMAGLHSSDKVGPKFSIPSPTFSKSSSAISEVTQPPSYEDAVKQQMTRSQQMDELLDVLIESGEMPADAREDHSCLQKVPKIPRSSRSPTAVLTKPSASFEQASSGSQIPFDPYATDSDEHLEVLLNSQSPLGKMSDVTLLKIGSEEPHFDGIMDGFSGKAAEDLFNAHEILPGPLSPMQTQFSPSSVDSNGLQLSFTESPWETMEWLDLTPPNSTPGFSALTTSSPSIFNIDFLDVTDLNLNSSMDLHLQQW.

The short motif at 12–27 is the MEF2C-binding element; sequence IRSKFRSVLQLRLQQR. One copy of the RPEL 1 repeat lies at 18–43; sequence SVLQLRLQQRRTQEQLANQGIIPPLK. The segment covering 48–61 has biased composition (basic and acidic residues); that stretch reads FHEQRKHLDSDKAK. The disordered stretch occupies residues 48–68; the sequence is FHEQRKHLDSDKAKNSLKRKA. RPEL repeat units lie at residues 62–87 and 106–131; these read NSLK…QAST and DDLN…PVDS. The HDAC5-binding stretch occupies residues 153 to 205; sequence FEEDSSSDGLSPDQTRSEDPQNSAGSPPDAKASDTPSTGSLGTNQDLASGSEN. The interval 154–281 is disordered; the sequence is EEDSSSDGLS…DQKAEKSPPP (128 aa). 3 stretches are compositionally biased toward polar residues: residues 159–177, 186–203, and 210–220; these read SDGL…NSAG, DTPS…ASGS, and SASQPSHQSDA. Over residues 248-265 the composition is skewed to basic residues; the sequence is NRHKKPKDPKPKVKKLKY. One can recognise an SAP domain in the interval 371-405; it reads LDDLKVSELRQQLRIRGLPVSGTKTALMDRLRPFQ. Residues Ser451, Ser455, Ser459, and Ser463 each carry the phosphoserine; by GSK3-beta modification. A coiled-coil region spans residues 516 to 561; sequence EKDKMLVEKQKVINELTWKLQQEQRQVEELRMQLQKQKRNNCSEKK. A phosphoserine; by GSK3-beta mark is found at Ser626, Ser630, Ser634, and Ser638. Disordered stretches follow at residues 635–678 and 693–734; these read PQHS…SSPI and SDKV…MTRS. The span at 699 to 715 shows a compositional bias: low complexity; that stretch reads KFSIPSPTFSKSSSAIS. A required for interaction with and ubiquitination by STUB1 region spans residues 717-938; it reads VTQPPSYEDA…SSMDLHLQQW (222 aa). Phosphoserine; by MAPK1 and MAPK3 occurs at positions 815, 862, and 869. At Thr896 the chain carries Phosphothreonine; by MAPK1 and MAPK3.

Homodimer. Interacts with SRF, its association does not depend on specific DNA sequences for ternary complex formation. Interacts with MLLT7/FOXO4. Interacts (via C-terminal) with EP300 (via the CREB-binding domain). Interacts with HDAC4 and HDAC5. Interacts with MEF2C. Interacts (via C-terminus) with STUB1/CHIP. Interacts with PURB. In terms of processing, ubiquitinated; by STUB1/CHIP at the C-terminus, leading to its degradation by the proteasome. Phosphorylation by GSK3B is required for STUB1/CHIP-mediated ubiquitination. Post-translationally, phosphorylation negatively regulates the intrinsic myocardin transcriptional activity. Phosphorylated; by GSK3B. Expressed in the heart, aorta and bladder. Expressed in smooth muscle cell-containing tissues: stomach, small intestine, colon, lung, placenta and uterus. Very faint expression in prostate and skeletal muscle.

The protein resides in the nucleus. In terms of biological role, smooth muscle cells (SM) and cardiac muscle cells-specific transcriptional factor which uses the canonical single or multiple CArG boxes DNA sequence. Acts as a cofactor of serum response factor (SRF) with the potential to modulate SRF-target genes. Plays a crucial role in cardiogenesis, urinary bladder development, and differentiation of the smooth muscle cell lineage (myogenesis). Positively regulates the transcription of genes involved in vascular smooth muscle contraction. This is Myocardin (MYOCD) from Homo sapiens (Human).